The chain runs to 104 residues: MQQNQRIRIRLKAFDHRLIDQSTSEIVETAKRTGAQVRGPIPLPTHKEKFTVLISPHVNKDARDQYEIRTHKRLIDIVEPTEKTVDALMRLDLAAGVDVQISLG.

It belongs to the universal ribosomal protein uS10 family. As to quaternary structure, part of the 30S ribosomal subunit.

Involved in the binding of tRNA to the ribosomes. This chain is Small ribosomal subunit protein uS10, found in Buchnera aphidicola subsp. Baizongia pistaciae (strain Bp).